Here is a 65-residue protein sequence, read N- to C-terminus: Precursor peptide TigB (65 aa).

6 TIGSVS motif repeats span residues 16-21 (TIGSVS), 23-28 (TIGSVS), 33-38 (TIGSVS), 40-45 (TIGSVS), 47-52 (TIGSVS), and 54-59 (TIGSVS). Methylcyclopropylglycine is present on residues Ile17, Ile24, Ile34, Ile41, Ile48, and Ile55.

In terms of processing, is subject to maturation by TigE, that catalyzes the formation of methylcyclopropylglycine (mCPG) residues from isoleucine residues residing in the repeating TIGSVS motifs.

Functionally, precursor peptide which undergoes post-translational modifications by tailoring enzymes, leading to the mature natural product. The polypeptide is Precursor peptide TigB (Paramaledivibacter caminithermalis (strain DSM 15212 / CIP 107654 / DViRD3) (Clostridium caminithermale)).